Consider the following 63-residue polypeptide: 2-hydroxymuconate tautomerase (63 aa).

The active-site Proton acceptor; via imino nitrogen is the Pro2.

This sequence belongs to the 4-oxalocrotonate tautomerase family. Homohexamer.

It catalyses the reaction (2Z,4E)-2-hydroxyhexa-2,4-dienedioate = (3E)-2-oxohex-3-enedioate. Its pathway is aromatic compound metabolism; salicylate degradation. Functionally, catalyzes the ketonization of 2-hydroxymuconate stereoselectively to yield 2-oxo-3-hexenedioate. This Stutzerimonas stutzeri (Pseudomonas stutzeri) protein is 2-hydroxymuconate tautomerase (nahJ).